Here is a 250-residue protein sequence, read N- to C-terminus: 2,3-bisphosphoglycerate-dependent phosphoglycerate mutase (250 aa).

Residues 10 to 17 (RHGESQWN), 23 to 24 (TG), R62, 89 to 92 (ERHY), K100, 116 to 117 (RR), and 185 to 186 (GN) each bind substrate. Catalysis depends on H11, which acts as the Tele-phosphohistidine intermediate. The Proton donor/acceptor role is filled by E89.

It belongs to the phosphoglycerate mutase family. BPG-dependent PGAM subfamily. Homodimer.

It catalyses the reaction (2R)-2-phosphoglycerate = (2R)-3-phosphoglycerate. It participates in carbohydrate degradation; glycolysis; pyruvate from D-glyceraldehyde 3-phosphate: step 3/5. In terms of biological role, catalyzes the interconversion of 2-phosphoglycerate and 3-phosphoglycerate. This chain is 2,3-bisphosphoglycerate-dependent phosphoglycerate mutase, found in Sodalis glossinidius (strain morsitans).